The sequence spans 326 residues: tRNA-modifying protein YgfZ (326 aa).

Residues Trp27 and Trp189 each contribute to the folate site.

Belongs to the tRNA-modifying YgfZ family.

It is found in the cytoplasm. In terms of biological role, folate-binding protein involved in regulating the level of ATP-DnaA and in the modification of some tRNAs. It is probably a key factor in regulatory networks that act via tRNA modification, such as initiation of chromosomal replication. The sequence is that of tRNA-modifying protein YgfZ from Salmonella paratyphi A (strain AKU_12601).